Reading from the N-terminus, the 296-residue chain is GTPase Era (296 aa).

Residues 7 to 174 (KAGYISIVGR…TEVIRHYLPE (168 aa)) form the Era-type G domain. The tract at residues 15–22 (GRPNVGKS) is G1. 15–22 (GRPNVGKS) provides a ligand contact to GTP. The interval 41–45 (QTTRH) is G2. The segment at 62–65 (DTPG) is G3. Residues 62–66 (DTPGF) and 123–126 (NKID) contribute to the GTP site. The segment at 123–126 (NKID) is G4. A G5 region spans residues 153–155 (VSA). The KH type-2 domain maps to 205-281 (IGEEVPYSVS…YLEIWVKVKS (77 aa)).

This sequence belongs to the TRAFAC class TrmE-Era-EngA-EngB-Septin-like GTPase superfamily. Era GTPase family. In terms of assembly, monomer.

It is found in the cytoplasm. It localises to the cell inner membrane. In terms of biological role, an essential GTPase that binds both GDP and GTP, with rapid nucleotide exchange. Plays a role in 16S rRNA processing and 30S ribosomal subunit biogenesis and possibly also in cell cycle regulation and energy metabolism. In Nitrosomonas eutropha (strain DSM 101675 / C91 / Nm57), this protein is GTPase Era.